Reading from the N-terminus, the 1019-residue chain is TOG array regulator of axonemal microtubules protein 2 (1019 aa).

4 disordered regions span residues 28-54 (AGPR…PEPR), 131-158 (RRLS…PLHS), 249-311 (TPSR…AKKP), and 991-1019 (SLGG…FQLD). Positions 1007–1019 (SKTTGSSYPFQLD) are enriched in polar residues.

Belongs to the Crescerin family.

In Homo sapiens (Human), this protein is TOG array regulator of axonemal microtubules protein 2.